The sequence spans 233 residues: Modulator of macroautophagy TMEM150B (233 aa).

Topologically, residues 1–7 (MWGYLSL) are cytoplasmic. A helical transmembrane segment spans residues 8–28 (MPVFLAVWAISGVWIVFAIAV). At 29–51 (TNRTVDLSKGFPYISICGSFPPQ) the chain is on the extracellular side. A glycan (N-linked (GlcNAc...) asparagine) is linked at asparagine 30. A helical transmembrane segment spans residues 52–72 (SCIFSQVLNMGAALAAWICIV). At 73–84 (RYHQLRDWGVRR) the chain is on the cytoplasmic side. Residues 85 to 105 (WPNQLILWTGLLCALGTSVVG) traverse the membrane as a helical segment. Topologically, residues 106-116 (NFQEKNQRPTH) are extracellular. The chain crosses the membrane as a helical span at residues 117–137 (LAGAFLAFILGNVYFWLQLLL). Over 138-155 (WRLKRLPQPGAAWIGPLR) the chain is Cytoplasmic. The chain crosses the membrane as a helical span at residues 156–176 (LGLCSVCTILIVAMIVLHACS). Over 177–185 (LRSVSAACE) the chain is Extracellular. The helical transmembrane segment at 186 to 206 (WVVAMLLFALFGLLAVDFSAL) threads the bilayer. Over 207 to 233 (ESCTLCVQPWPSLSPPPASPISLPVQL) the chain is Cytoplasmic.

Belongs to the DRAM/TMEM150 family. As to expression, highly expressed in the colon and lung with comparatively high levels also detectable in the lymph nodes, placenta, duodenum, peripheral blood mononuclear cells and spleen.

The protein localises to the cell membrane. It is found in the endosome membrane. The protein resides in the cytoplasmic vesicle. Its subcellular location is the autophagosome membrane. In terms of biological role, modulator of macroautophagy that causes accumulation of autophagosomes under basal conditions and enhances autophagic flux. Represses cell death and promotes long-term clonogenic survival of cells grown in the absence of glucose in a macroautophagy-independent manner. May have some role in extracellular matrix engulfment or growth factor receptor recycling, both of which can modulate cell survival. This Homo sapiens (Human) protein is Modulator of macroautophagy TMEM150B.